The primary structure comprises 90 residues: Small ribosomal subunit protein uS17 (90 aa).

Belongs to the universal ribosomal protein uS17 family. In terms of assembly, part of the 30S ribosomal subunit.

In terms of biological role, one of the primary rRNA binding proteins, it binds specifically to the 5'-end of 16S ribosomal RNA. This Burkholderia multivorans (strain ATCC 17616 / 249) protein is Small ribosomal subunit protein uS17.